The chain runs to 328 residues: Cytochrome f (328 aa).

A signal peptide spans 1 to 44; sequence MRTPDFSAIWQASKQLTARIILLAFATFALYVFHDLAFPQGAAA. The heme site is built by Y45, C66, C69, and H70. A helical membrane pass occupies residues 294–314; the sequence is IKGLMVFLAGIMLAQILLVIK.

This sequence belongs to the cytochrome f family. In terms of assembly, the 4 large subunits of the cytochrome b6-f complex are cytochrome b6, subunit IV (17 kDa polypeptide, PetD), cytochrome f and the Rieske protein, while the 4 small subunits are PetG, PetL, PetM and PetN. The complex functions as a dimer. Heme serves as cofactor.

It localises to the cellular thylakoid membrane. In terms of biological role, component of the cytochrome b6-f complex, which mediates electron transfer between photosystem II (PSII) and photosystem I (PSI), cyclic electron flow around PSI, and state transitions. This is Cytochrome f from Rippkaea orientalis (strain PCC 8801 / RF-1) (Cyanothece sp. (strain PCC 8801)).